A 469-amino-acid polypeptide reads, in one-letter code: RuvB-like helicase 2 (469 aa).

Residue 74 to 81 (GPPSTGKT) participates in ATP binding.

Belongs to the RuvB family. In terms of assembly, may form heterododecamers with RVB1. Component of the SWR1 chromatin remodeling complex, the INO80 chromatin remodeling complex, and of the R2TP complex.

It localises to the nucleus. It catalyses the reaction ATP + H2O = ADP + phosphate + H(+). DNA helicase which participates in several chromatin remodeling complexes, including the SWR1 and the INO80 complexes. The SWR1 complex mediates the ATP-dependent exchange of histone H2A for the H2A variant HZT1 leading to transcriptional regulation of selected genes by chromatin remodeling. The INO80 complex remodels chromatin by shifting nucleosomes and is involved in DNA repair. Also involved in pre-rRNA processing. The protein is RuvB-like helicase 2 (RVB2) of Eremothecium gossypii (strain ATCC 10895 / CBS 109.51 / FGSC 9923 / NRRL Y-1056) (Yeast).